A 539-amino-acid chain; its full sequence is Phosphatidylinositol 4-phosphate 5-kinase type-1 beta (539 aa).

Residues 1 to 21 (MSSTAENGDAVPGKQNEEKTY) are disordered. In terms of domain architecture, PIPK spans 25 to 395 (ASSAIKGAIQ…RFLKFMNSRV (371 aa)). Ser-445, Ser-447, and Ser-448 each carry phosphoserine.

In terms of assembly, interacts with RAC1, AJUBA, PLD1, PLD2 and ARF1. Highly expressed in brain and testis. Barely detectable in liver and skeletal muscle.

It is found in the cytoplasm. The protein resides in the cytosol. Its subcellular location is the cell membrane. The protein localises to the endomembrane system. It catalyses the reaction a 1,2-diacyl-sn-glycero-3-phospho-(1D-myo-inositol 4-phosphate) + ATP = a 1,2-diacyl-sn-glycero-3-phospho-(1D-myo-inositol-4,5-bisphosphate) + ADP + H(+). The enzyme catalyses 1-octadecanoyl-2-(5Z,8Z,11Z,14Z)-eicosatetraenoyl-sn-glycero-3-phospho-1D-myo-inositol 4-phosphate + ATP = 1-octadecanoyl-2-(5Z,8Z,11Z,14Z)-eicosatetraenoyl-sn-glycero-3-phospho-1D-myo-inositol 4,5-bisphosphate + ADP + H(+). The catalysed reaction is 1-octadecanoyl-2-(9Z)-octadecenoyl-sn-glycero-3-phospho-1D-myo-inositol 4-phosphate + ATP = 1-octadecanoyl-2-(9Z)-octadecenoyl-sn-glycero-3-phospho-1D-myo-inositol 4,5-bisphosphate + ADP + H(+). It carries out the reaction 1-octadecanoyl-2-(9Z)-octadecenoyl-sn-glycero-3-phospho-1D-myo-inositol + ATP = 1-octadecanoyl-2-(9Z)-octadecenoyl-sn-glycero-3-phospho-1D-myo-inositol 5-phosphate + ADP + H(+). It catalyses the reaction 1-octadecanoyl-2-(9Z,12Z)-octadecadienoyl-sn-glycero-3-phospho-1D-myo-inositol + ATP = 1-octadecanoyl-2-(9Z,12Z)-octadecadienoyl-sn-glycero-3-phospho-1D-myo-inositol 5-phosphate + ADP + H(+). The enzyme catalyses 1-octadecanoyl-2-(5Z,8Z,11Z,14Z-eicosatetraenoyl)-sn-glycero-3-phospho-(1D-myo-inositol) + ATP = 1-octadecanoyl-2-(5Z,8Z,11Z,14Z)-eicosatetraenoyl-sn-glycero-3-phospho-1D-myo-inositol 5-phosphate + ADP + H(+). The catalysed reaction is 1,2-di-(9Z,12Z)-octadecadienoyl-sn-glycero-3-phospho-1D-myo-inositol + ATP = 1,2-di(9Z,12Z)-octadecadienoyl-sn-glycero-3-phospho-1D-myo-inositol 5-phosphate + ADP + H(+). With respect to regulation, activated by phosphatidic acid. Its function is as follows. Catalyzes the phosphorylation of phosphatidylinositol 4-phosphate (PtdIns(4)P/PI4P) to form phosphatidylinositol 4,5-bisphosphate (PtdIns(4,5)P2/PIP2), a lipid second messenger that regulates several cellular processes such as signal transduction, vesicle trafficking, actin cytoskeleton dynamics, cell adhesion, and cell motility. PtdIns(4,5)P2 can directly act as a second messenger or can be utilized as a precursor to generate other second messengers: inositol 1,4,5-trisphosphate (IP3), diacylglycerol (DAG) or phosphatidylinositol-3,4,5-trisphosphate (PtdIns(3,4,5)P3/PIP3). Mediates RAC1-dependent reorganization of actin filaments. Contributes to the activation of phospholipase PLD2. Together with PIP5K1A, is required, after stimulation by G-protein coupled receptors, for the synthesis of IP3 that will induce stable platelet adhesion. The protein is Phosphatidylinositol 4-phosphate 5-kinase type-1 beta of Mus musculus (Mouse).